The sequence spans 362 residues: Phosphoserine aminotransferase (362 aa).

L-glutamate is bound by residues S9 and R42. Pyridoxal 5'-phosphate-binding positions include 76–77 (GR), W102, T153, D174, and Q197. K198 carries the post-translational modification N6-(pyridoxal phosphate)lysine. 239–240 (NT) provides a ligand contact to pyridoxal 5'-phosphate.

This sequence belongs to the class-V pyridoxal-phosphate-dependent aminotransferase family. SerC subfamily. In terms of assembly, homodimer. Pyridoxal 5'-phosphate serves as cofactor.

Its subcellular location is the cytoplasm. It catalyses the reaction O-phospho-L-serine + 2-oxoglutarate = 3-phosphooxypyruvate + L-glutamate. The enzyme catalyses 4-(phosphooxy)-L-threonine + 2-oxoglutarate = (R)-3-hydroxy-2-oxo-4-phosphooxybutanoate + L-glutamate. Its pathway is amino-acid biosynthesis; L-serine biosynthesis; L-serine from 3-phospho-D-glycerate: step 2/3. The protein operates within cofactor biosynthesis; pyridoxine 5'-phosphate biosynthesis; pyridoxine 5'-phosphate from D-erythrose 4-phosphate: step 3/5. Catalyzes the reversible conversion of 3-phosphohydroxypyruvate to phosphoserine and of 3-hydroxy-2-oxo-4-phosphonooxybutanoate to phosphohydroxythreonine. In Citrobacter koseri (strain ATCC BAA-895 / CDC 4225-83 / SGSC4696), this protein is Phosphoserine aminotransferase.